The primary structure comprises 517 residues: Ribose import ATP-binding protein RbsA 2 (517 aa).

ABC transporter domains follow at residues 11 to 251 and 263 to 507; these read LEMR…VGRD and YDPG…ALAT. Position 43–50 (43–50) interacts with ATP; that stretch reads GENGAGKS.

Belongs to the ABC transporter superfamily. Ribose importer (TC 3.A.1.2.1) family. In terms of assembly, the complex is composed of an ATP-binding protein (RbsA), two transmembrane proteins (RbsC) and a solute-binding protein (RbsB).

The protein resides in the cell inner membrane. The enzyme catalyses D-ribose(out) + ATP + H2O = D-ribose(in) + ADP + phosphate + H(+). In terms of biological role, part of the ABC transporter complex RbsABC involved in ribose import. Responsible for energy coupling to the transport system. The protein is Ribose import ATP-binding protein RbsA 2 of Burkholderia pseudomallei (strain 1710b).